A 340-amino-acid polypeptide reads, in one-letter code: DnaJ homolog subfamily B member 1 (340 aa).

The J domain occupies 2–70; it reads GKDYYQTLGL…REIFDRYGEE (69 aa). The segment at 68 to 90 is disordered; the sequence is GEEGLKGSGPSGGSSGGTNGTSF. The segment covering 73-86 has biased composition (gly residues); sequence KGSGPSGGSSGGTN. Phosphothreonine is present on T307.

Interacts with DNAJC3. Interacts with HSF1 (via transactivation domain); this interaction results in the inhibition of heat shock- and HSF1-induced transcriptional activity during the attenuation and recovery phase period of the heat shock response. Interacts with BAG3.

The protein resides in the cytoplasm. It localises to the nucleus. Its subcellular location is the nucleolus. Functionally, interacts with HSP70 and can stimulate its ATPase activity. Stimulates the association between HSC70 and HIP. Negatively regulates heat shock-induced HSF1 transcriptional activity during the attenuation and recovery phase period of the heat shock response. Stimulates ATP hydrolysis and the folding of unfolded proteins mediated by HSPA1A/B (in vitro). The polypeptide is DnaJ homolog subfamily B member 1 (DNAJB1) (Bos taurus (Bovine)).